The primary structure comprises 659 residues: Mannosyl-oligosaccharide 1,2-alpha-mannosidase IA (659 aa).

The Cytoplasmic segment spans residues 1-48 (MPVGGLLPLFSSPAGGGLGGGLGGGLGGGGGGGGRKGSGPSAFRLTEK). Residues 49–69 (FVLLLVFSAFITLCFGAIFFL) form a helical; Signal-anchor for type II membrane protein membrane-spanning segment. Over 70-659 (PDSSKLLSGV…NIKKVEDNEK (590 aa)) the chain is Lumenal. The interval 88–121 (QPAADHKPGPGARAEDAADGRARPGEEGAPGDPA) is disordered. The span at 91-113 (ADHKPGPGARAEDAADGRARPGE) shows a compositional bias: basic and acidic residues. The cysteines at positions 482 and 514 are disulfide-linked. Glutamate 528 (proton donor) is an active-site residue. Position 639 (threonine 639) interacts with Ca(2+).

This sequence belongs to the glycosyl hydrolase 47 family. Ca(2+) serves as cofactor.

It is found in the endoplasmic reticulum membrane. The enzyme catalyses N(4)-(alpha-D-Man-(1-&gt;2)-alpha-D-Man-(1-&gt;2)-alpha-D-Man-(1-&gt;3)-[alpha-D-Man-(1-&gt;2)-alpha-D-Man-(1-&gt;3)-[alpha-D-Man-(1-&gt;2)-alpha-D-Man-(1-&gt;6)]-alpha-D-Man-(1-&gt;6)]-beta-D-Man-(1-&gt;4)-beta-D-GlcNAc-(1-&gt;4)-beta-D-GlcNAc)-L-asparaginyl-[protein] (N-glucan mannose isomer 9A1,2,3B1,2,3) + 4 H2O = N(4)-(alpha-D-Man-(1-&gt;3)-[alpha-D-Man-(1-&gt;3)-[alpha-D-Man-(1-&gt;6)]-alpha-D-Man-(1-&gt;6)]-beta-D-Man-(1-&gt;4)-beta-D-GlcNAc-(1-&gt;4)-beta-D-GlcNAc)-L-asparaginyl-[protein] (N-glucan mannose isomer 5A1,2) + 4 beta-D-mannose. The catalysed reaction is N(4)-(alpha-D-Man-(1-&gt;2)-alpha-D-Man-(1-&gt;2)-alpha-D-Man-(1-&gt;3)-[alpha-D-Man-(1-&gt;3)-[alpha-D-Man-(1-&gt;2)-alpha-D-Man-(1-&gt;6)]-alpha-D-Man-(1-&gt;6)]-beta-D-Man-(1-&gt;4)-beta-D-GlcNAc-(1-&gt;4)-beta-D-GlcNAc)-L-asparaginyl-[protein] (N-glucan mannose isomer 8A1,2,3B1,3) + 3 H2O = N(4)-(alpha-D-Man-(1-&gt;3)-[alpha-D-Man-(1-&gt;3)-[alpha-D-Man-(1-&gt;6)]-alpha-D-Man-(1-&gt;6)]-beta-D-Man-(1-&gt;4)-beta-D-GlcNAc-(1-&gt;4)-beta-D-GlcNAc)-L-asparaginyl-[protein] (N-glucan mannose isomer 5A1,2) + 3 beta-D-mannose. It participates in protein modification; protein glycosylation. With respect to regulation, inhibited by both 1-deoxymannojirimycin and kifunensine. Involved in the maturation of Asn-linked oligosaccharides. Progressively trim alpha-1,2-linked mannose residues from Man(9)GlcNAc(2) to produce Man(5)GlcNAc(2). The sequence is that of Mannosyl-oligosaccharide 1,2-alpha-mannosidase IA (MAN1A1) from Sus scrofa (Pig).